Consider the following 143-residue polypeptide: Transcriptional regulator MraZ (143 aa).

SpoVT-AbrB domains are found at residues 5 to 47 and 76 to 119; these read TYTP…PREE and TDEQ…DAQA.

It belongs to the MraZ family. As to quaternary structure, forms oligomers.

It localises to the cytoplasm. The protein localises to the nucleoid. The polypeptide is Transcriptional regulator MraZ (Rhodococcus jostii (strain RHA1)).